Reading from the N-terminus, the 218-residue chain is rRNA methyltransferase 2, mitochondrial (218 aa).

S-adenosyl-L-methionine contacts are provided by residues 59–62, aspartate 80, 96–97, and aspartate 133; these read PGSW and DI. Catalysis depends on lysine 173, which acts as the Proton acceptor.

The protein belongs to the class I-like SAM-binding methyltransferase superfamily. RNA methyltransferase RlmE family.

The protein resides in the mitochondrion. The catalysed reaction is a uridine in 21S rRNA + S-adenosyl-L-methionine = a 2'-O-methyluridine in 21S rRNA + S-adenosyl-L-homocysteine + H(+). S-adenosyl-L-methionine-dependent 2'-O-ribose methyltransferase that catalyzes the formation of the 2'-O-methyluridine corresponding to position 2791 in S.cerevisiae 21S mitochondrial large subunit ribosomal RNA (mtLSU rRNA), a universally conserved modification in the peptidyl transferase domain of the mtLSU rRNA. This chain is rRNA methyltransferase 2, mitochondrial, found in Schizosaccharomyces pombe (strain 972 / ATCC 24843) (Fission yeast).